Reading from the N-terminus, the 72-residue chain is MPQAKVVLPAPNGLDEELMGLAIYKLNELGTLEGNEIGVYTAERPDNVPEDCPDNMVFLEFRASVIPYLGRR.

The sequence is that of Gene 42 protein (42) from Mycobacterium phage L5 (Mycobacteriophage L5).